We begin with the raw amino-acid sequence, 155 residues long: MKIGLCAYSGYKIYPGHGKTMVKVDGKTFTFLNSKCEAAHLMRRNPRKVTWTVLYRRKFKKGQEEEQTKKRTRRTQKYQRAIVGASLSDIMAKRNMKPEVRKAQRDQAIKAAKEQKKSTKAAKKASAPAPKAKAAPKAKAAKVSQKSAPRVGGKR.

The tract at residues 92-155 (AKRNMKPEVR…KSAPRVGGKR (64 aa)) is disordered. Basic and acidic residues predominate over residues 96–117 (MKPEVRKAQRDQAIKAAKEQKK). Over residues 124 to 133 (KASAPAPKAK) the composition is skewed to low complexity.

This sequence belongs to the eukaryotic ribosomal protein eL24 family.

This chain is Large ribosomal subunit protein eL24 (RpL24), found in Spodoptera frugiperda (Fall armyworm).